We begin with the raw amino-acid sequence, 310 residues long: Malate dehydrogenase (310 aa).

NAD(+) is bound by residues 7-12 and Asp-32; that span reads GAGNVG. Arg-81 and Arg-87 together coordinate substrate. Residues Asn-94 and 117–119 contribute to the NAD(+) site; that span reads VSN. Substrate-binding residues include Asn-119 and Arg-150. His-174 functions as the Proton acceptor in the catalytic mechanism.

This sequence belongs to the LDH/MDH superfamily. MDH type 3 family.

It catalyses the reaction (S)-malate + NAD(+) = oxaloacetate + NADH + H(+). Catalyzes the reversible oxidation of malate to oxaloacetate. The sequence is that of Malate dehydrogenase from Chlorobium luteolum (strain DSM 273 / BCRC 81028 / 2530) (Pelodictyon luteolum).